The following is a 415-amino-acid chain: uncharacterized protein (415 aa).

The [4Fe-4S] cluster site is built by Cys85, Cys91, Cys94, and Cys175. Residues Gln248, Tyr276, Glu297, and Asn344 each contribute to the S-adenosyl-L-methionine site. The active-site Nucleophile is Cys371.

This sequence belongs to the class I-like SAM-binding methyltransferase superfamily. RNA M5U methyltransferase family.

This is an uncharacterized protein from Leptospira interrogans serogroup Icterohaemorrhagiae serovar copenhageni (strain Fiocruz L1-130).